A 592-amino-acid polypeptide reads, in one-letter code: MAVPPLLRGALLLWQLLATGGAALEIGRFDPERGRGPAPCQAMEIPMCRGIGYNLTRMPNLLGHTSQGEAAAQLAEFSPLVQYGCHSHLRFFLCSLYAPMCTDQVSTPIPACRPMCEQARLRCAPIMEQFNFGWPDSLDCARLPTRNDPHALCMEAPENATAGPTEPHKGLGMLPVAPRPARPPGDSAPGPGSGGTCDNPEKFQYVEKSRSCAPRCGPGVEVFWSRRDKDFALVWMAVWSALCFFSTAFTVFTFLLEPHRFQYPERPIIFLSMCYNVYSLAFLIRAVAGAQSVACDQEAGALYVIQEGLENTGCTLVFLLLYYFGMASSLWWVVLTLTWFLAAGKKWGHEAIEAHGSYFHMAAWGLPALKTIVVLTLRKVAGDELTGLCYVASMDPAALTGFVLVPLSCYLVLGTSFLLTGFVALFHIRKIMKTGGTNTEKLEKLMVKIGVFSILYTVPATCVIVCYVYERLNMDFWRLRATEQPCTAAAVPGGRRDCSLPGGSVPTVAVFMLKIFMSLVVGITSGVWVWSSKTFQTWQSLCYRKMAAGRARAKACRTPGGYGRGTHCHYKAPTVVLHMTKTDPSLENPTHL.

The signal sequence occupies residues 1 to 23 (MAVPPLLRGALLLWQLLATGGAA). Topologically, residues 24–230 (LEIGRFDPER…EVFWSRRDKD (207 aa)) are extracellular. Positions 35–156 (RGPAPCQAME…NDPHALCMEA (122 aa)) constitute an FZ domain. Disulfide bonds link Cys40–Cys101, Cys48–Cys94, Cys85–Cys123, Cys112–Cys153, and Cys116–Cys140. The segment at 59-173 (PNLLGHTSQG…PTEPHKGLGM (115 aa)) is required for Wnt-activated receptor activity. Residues 231–251 (FALVWMAVWSALCFFSTAFTV) traverse the membrane as a helical segment. The Cytoplasmic portion of the chain corresponds to 252 to 267 (FTFLLEPHRFQYPERP). The helical transmembrane segment at 268 to 288 (IIFLSMCYNVYSLAFLIRAVA) threads the bilayer. The Extracellular segment spans residues 289–314 (GAQSVACDQEAGALYVIQEGLENTGC). A helical membrane pass occupies residues 315 to 335 (TLVFLLLYYFGMASSLWWVVL). Residues 336–356 (TLTWFLAAGKKWGHEAIEAHG) lie on the Cytoplasmic side of the membrane. The helical transmembrane segment at 357-377 (SYFHMAAWGLPALKTIVVLTL) threads the bilayer. Topologically, residues 378–401 (RKVAGDELTGLCYVASMDPAALTG) are extracellular. The helical transmembrane segment at 402-422 (FVLVPLSCYLVLGTSFLLTGF) threads the bilayer. Over 423–448 (VALFHIRKIMKTGGTNTEKLEKLMVK) the chain is Cytoplasmic. A helical membrane pass occupies residues 449 to 469 (IGVFSILYTVPATCVIVCYVY). The Extracellular segment spans residues 470–509 (ERLNMDFWRLRATEQPCTAAAVPGGRRDCSLPGGSVPTVA). Residues 510–530 (VFMLKIFMSLVVGITSGVWVW) form a helical membrane-spanning segment. Residues 531–592 (SSKTFQTWQS…DPSLENPTHL (62 aa)) are Cytoplasmic-facing. Residues 533–538 (KTFQTW) carry the Lys-Thr-X-X-X-Trp motif, mediates interaction with the PDZ domain of Dvl family members motif. The interval 555–592 (ACRTPGGYGRGTHCHYKAPTVVLHMTKTDPSLENPTHL) is required for CTNNB1 accumulation and TCF transcription factor activity.

The protein belongs to the G-protein coupled receptor Fz/Smo family. In terms of processing, ubiquitinated by ZNRF3, leading to its degradation by the proteasome.

It is found in the cell membrane. In terms of biological role, receptor for WNT2 that is coupled to the beta-catenin canonical signaling pathway, which leads to the activation of disheveled proteins, inhibition of GSK-3 kinase, nuclear accumulation of beta-catenin and activation of Wnt target genes. Plays a role in neuromuscular junction (NMJ) assembly by negatively regulating the clustering of acetylcholine receptors (AChR) through the beta-catenin canonical signaling pathway. May play a role in neural progenitor cells (NPCs) viability through the beta-catenin canonical signaling pathway by negatively regulating cell cycle arrest leading to inhibition of neuron apoptotic process. During hippocampal development, regulates neuroblast proliferation and apoptotic cell death. Controls bone formation through non canonical Wnt signaling mediated via ISG15. Positively regulates bone regeneration through non canonical Wnt signaling. This is Frizzled-9 from Rattus norvegicus (Rat).